Consider the following 786-residue polypeptide: E3 ubiquitin-protein ligase UHRF1 (786 aa).

In terms of domain architecture, Ubiquitin-like spans 1–78 (MWIQVRTMDG…IQLLVRQSLV (78 aa)). S76, S98, and S102 each carry phosphoserine. The segment at 82-134 (PVPSSSGGSKERDSELSDTDSGCGLAQSESDKSSNSGEAANEPEGKADEDECD) is disordered. Tudor-like regions lie at residues 139–213 (GLYK…ARAR) and 220–287 (DLQV…IERP). Residue K283 forms a Glycyl lysine isopeptide (Lys-Gly) (interchain with G-Cter in SUMO2) linkage. A linker region spans residues 300–305 (RKSGPS). Phosphoserine; by PKA is present on S302. The PHD-type zinc-finger motif lies at 303–370 (GPSCKHCKDD…EWYCPDCRID (68 aa)). 2 histone H3R2me0 binding regions span residues 337–341 (CDECD) and 357–359 (PPE). At S372 the chain carries Phosphoserine. A Glycyl lysine isopeptide (Lys-Gly) (interchain with G-Cter in SUMO2) cross-link involves residue K389. K403 is modified (N6-acetyllysine). Residues 423 to 586 (GPIPGIPVGT…FLVWRFLLRR (164 aa)) enclose the YDG domain. A required to promote base flipping region spans residues 449–450 (HV). DNA-binding positions include 467–468 (AG) and D473. Required for formation of a 5-methylcytosine-binding pocket regions lie at residues 470 to 473 (YEDD) and 482 to 485 (YTGS). K550 carries the N6-acetyllysine; alternate modification. K550 is covalently cross-linked (Glycyl lysine isopeptide (Lys-Gly) (interchain with G-Cter in SUMO2); alternate). A disordered region spans residues 626–679 (NSKQAALDKEEEDGEEGFTSPRKGKRKSKSAGGDGSSRGTPKKTKVEPYSLTTQ). Phosphoserine; by CDK1 is present on S645. A phosphoserine mark is found at S655 and S662. A Glycyl lysine isopeptide (Lys-Gly) (interchain with G-Cter in SUMO2) cross-link involves residue K670. The segment at 717–756 (CICCQELVFRPITTVCQHNVCKDCLDRSFKAQVFSCPACR) adopts an RING-type zinc-finger fold.

As to quaternary structure, interacts with DNMT3A and DNMT3B. Interacts with DNMT1; the interaction is direct. Interacts with USP7; leading to its deubiquitination. Interacts with histone H3. Interacts with HDAC1, but not with HDAC2. Interacts with BLTP3A. Interacts with PML. Interacts with EHMT2. Binds methylated CpG containing oligonucleotides. Interacts with ZNF263; recruited to the SIX3 promoter along with other proteins involved in chromatin modification and transcriptional corepression where it contributes to transcriptional repression. Interacts with UHRF2. Interacts with FANCD2. Interacts with TET1 isoform 2; this interaction induces the recruitment of TET1 isoform 2 to replicating heterochromatin. In terms of processing, phosphorylation at Ser-302 of the linker region decreases the binding to H3K9me3. Phosphorylation at Ser-645 by CDK1 during M phase impairs interaction with USP7, preventing deubiquitination and leading to degradation by the proteasome. Post-translationally, ubiquitinated; which leads to proteasomal degradation. Autoubiquitinated; interaction with USP7 leads to deubiquitination and prevents degradation. Ubiquitination and degradation takes place during M phase, when phosphorylation at Ser-645 prevents interaction with USP7 and subsequent deubiquitination. Polyubiquitination may be stimulated by DNA damage.

It localises to the nucleus. It catalyses the reaction S-ubiquitinyl-[E2 ubiquitin-conjugating enzyme]-L-cysteine + [acceptor protein]-L-lysine = [E2 ubiquitin-conjugating enzyme]-L-cysteine + N(6)-ubiquitinyl-[acceptor protein]-L-lysine.. It functions in the pathway protein modification; protein ubiquitination. In terms of biological role, multidomain protein that acts as a key epigenetic regulator by bridging DNA methylation and chromatin modification. Specifically recognizes and binds hemimethylated DNA at replication forks via its YDG domain and recruits DNMT1 methyltransferase to ensure faithful propagation of the DNA methylation patterns through DNA replication. In addition to its role in maintenance of DNA methylation, also plays a key role in chromatin modification: through its tudor-like regions and PHD-type zinc fingers, specifically recognizes and binds histone H3 trimethylated at 'Lys-9' (H3K9me3) and unmethylated at 'Arg-2' (H3R2me0), respectively, and recruits chromatin proteins. Enriched in pericentric heterochromatin where it recruits different chromatin modifiers required for this chromatin replication. Also localizes to euchromatic regions where it negatively regulates transcription possibly by impacting DNA methylation and histone modifications. Has E3 ubiquitin-protein ligase activity by mediating the ubiquitination of target proteins such as histone H3 and PML. It is still unclear how E3 ubiquitin-protein ligase activity is related to its role in chromatin in vivo. Plays a role in DNA repair by cooperating with UHRF2 to ensure recruitment of FANCD2 to interstrand cross-links (ICLs) leading to FANCD2 activation. Plays a pivotal role in the establishment of correct spindle architecture by catalyzing the 'Lys-63'-linked ubiquitination of KIF11, thereby controlling KIF11 localization on the spindle. This is E3 ubiquitin-protein ligase UHRF1 (UHRF1) from Bos taurus (Bovine).